A 252-amino-acid chain; its full sequence is Imidazole glycerol phosphate synthase subunit HisF (252 aa).

Residues Asp-11 and Asp-130 contribute to the active site.

This sequence belongs to the HisA/HisF family. Heterodimer of HisH and HisF.

The protein resides in the cytoplasm. The enzyme catalyses 5-[(5-phospho-1-deoxy-D-ribulos-1-ylimino)methylamino]-1-(5-phospho-beta-D-ribosyl)imidazole-4-carboxamide + L-glutamine = D-erythro-1-(imidazol-4-yl)glycerol 3-phosphate + 5-amino-1-(5-phospho-beta-D-ribosyl)imidazole-4-carboxamide + L-glutamate + H(+). It functions in the pathway amino-acid biosynthesis; L-histidine biosynthesis; L-histidine from 5-phospho-alpha-D-ribose 1-diphosphate: step 5/9. In terms of biological role, IGPS catalyzes the conversion of PRFAR and glutamine to IGP, AICAR and glutamate. The HisF subunit catalyzes the cyclization activity that produces IGP and AICAR from PRFAR using the ammonia provided by the HisH subunit. This is Imidazole glycerol phosphate synthase subunit HisF from Aromatoleum aromaticum (strain DSM 19018 / LMG 30748 / EbN1) (Azoarcus sp. (strain EbN1)).